Reading from the N-terminus, the 328-residue chain is Malate dehydrogenase (328 aa).

An NAD(+)-binding site is contributed by 11–17 (GAAGQIG). Substrate-binding residues include arginine 94 and arginine 100. NAD(+)-binding positions include asparagine 107, glutamine 114, and 131–133 (VGN). 2 residues coordinate substrate: asparagine 133 and arginine 164. The active-site Proton acceptor is the histidine 189.

Belongs to the LDH/MDH superfamily. MDH type 2 family.

The catalysed reaction is (S)-malate + NAD(+) = oxaloacetate + NADH + H(+). Catalyzes the reversible oxidation of malate to oxaloacetate. The sequence is that of Malate dehydrogenase from Xanthomonas campestris pv. campestris (strain 8004).